The following is a 107-amino-acid chain: Iron-binding protein IscA (107 aa).

The Fe cation site is built by Cys-35, Cys-99, and Cys-101.

Belongs to the HesB/IscA family. Homodimer; may form tetramers and higher multimers. It depends on Fe cation as a cofactor.

Functionally, is able to transfer iron-sulfur clusters to apo-ferredoxin. Multiple cycles of [2Fe2S] cluster formation and transfer are observed, suggesting that IscA acts catalytically. Recruits intracellular free iron so as to provide iron for the assembly of transient iron-sulfur cluster in IscU in the presence of IscS, L-cysteine and the thioredoxin reductase system TrxA/TrxB. This Yersinia enterocolitica serotype O:8 / biotype 1B (strain NCTC 13174 / 8081) protein is Iron-binding protein IscA.